Consider the following 49-residue polypeptide: Large ribosomal subunit protein bL33 (49 aa).

The protein belongs to the bacterial ribosomal protein bL33 family.

The sequence is that of Large ribosomal subunit protein bL33 from Clostridium botulinum (strain Alaska E43 / Type E3).